Consider the following 238-residue polypeptide: Probable transcriptional regulatory protein SERP0322 (238 aa).

It belongs to the TACO1 family. YeeN subfamily.

The protein resides in the cytoplasm. The protein is Probable transcriptional regulatory protein SERP0322 of Staphylococcus epidermidis (strain ATCC 35984 / DSM 28319 / BCRC 17069 / CCUG 31568 / BM 3577 / RP62A).